The chain runs to 92 residues: Acylphosphatase (92 aa).

The region spanning 4-92 (AVQLDVFGRV…SACHKFSVVG (89 aa)) is the Acylphosphatase-like domain. Residues R19 and N37 contribute to the active site.

It belongs to the acylphosphatase family.

The catalysed reaction is an acyl phosphate + H2O = a carboxylate + phosphate + H(+). The chain is Acylphosphatase (acyP) from Latilactobacillus sakei subsp. sakei (strain 23K) (Lactobacillus sakei subsp. sakei).